A 246-amino-acid chain; its full sequence is Agamous-like MADS-box protein AGL5 (246 aa).

One can recognise an MADS-box domain in the interval 18-72 (RGKIEIKRIENTTNRQVTFCKRRNGLLKKAYELSVLCDAEVALVIFSTRGRLYEY). Residues 102–192 (TQYYQQEASK…RSKITERTGL (91 aa)) enclose the K-box domain.

In terms of assembly, interacts with AGL15 and AGL16.

It localises to the nucleus. In terms of biological role, probable transcription factor. Interacts genetically with TT16/AGL32 in a partially antagonistic manner during flower development. Is essential for the coordination of cell divisions in ovule, seed coat development and endosperm formation. In Arabidopsis thaliana (Mouse-ear cress), this protein is Agamous-like MADS-box protein AGL5 (AGL5).